A 175-amino-acid chain; its full sequence is MTTIVSVRRKGQVVVGGDGQVSLGNTVMKGNARKVRRLYNGKVLAGFAGGTADAFTLFELFERKLEMHQGHLLKSAVELAKDWRTDRALRKLEAMLIVADEKESLIITGIGDVVQPEEDQILAIGSGGNYALSAARALVENTELSAHEIVEKSLRIAGDICVFTNTNFTIEELPN.

Residue Thr-2 is part of the active site. Na(+) contacts are provided by Gly-158, Cys-161, and Thr-164.

Belongs to the peptidase T1B family. HslV subfamily. As to quaternary structure, a double ring-shaped homohexamer of HslV is capped on each side by a ring-shaped HslU homohexamer. The assembly of the HslU/HslV complex is dependent on binding of ATP.

Its subcellular location is the cytoplasm. It catalyses the reaction ATP-dependent cleavage of peptide bonds with broad specificity.. Its activity is regulated as follows. Allosterically activated by HslU binding. Functionally, protease subunit of a proteasome-like degradation complex believed to be a general protein degrading machinery. The protein is ATP-dependent protease subunit HslV of Haemophilus influenzae (strain PittEE).